The sequence spans 104 residues: Large ribosomal subunit protein bL21 (104 aa).

Belongs to the bacterial ribosomal protein bL21 family. In terms of assembly, part of the 50S ribosomal subunit. Contacts protein L20.

Functionally, this protein binds to 23S rRNA in the presence of protein L20. In Rhodopirellula baltica (strain DSM 10527 / NCIMB 13988 / SH1), this protein is Large ribosomal subunit protein bL21.